Reading from the N-terminus, the 613-residue chain is Leucine-rich repeat receptor-like protein FASCIATED EAR2 (613 aa).

The N-terminal stretch at 1–28 (MLTATPLPHQLLATFLLVLASATQPAVP) is a signal peptide. Residues 29–573 (ASTDRAALLA…WLGGWHGENG (545 aa)) lie on the Extracellular side of the membrane. LRR repeat units follow at residues 79–103 (TPSV…PLAL), 104–128 (LRRL…LPRS), 130–150 (LALD…LPSS), 151–176 (LPAL…SFPA), 178–199 (LAAL…IVAD), 202–226 (NSAL…IAAV), 227–250 (RSLQ…IGNL), 251–274 (TYLQ…LAGC), 276–297 (QLLY…ELDA), 298–322 (LASL…LAGC), 324–346 (SLEV…VAKW), 347–370 (LSLK…MFSF), 372–394 (LLQW…GFNV), 435–459 (VQAT…LVDM), 460–483 (KGLE…LGGM), 484–507 (GRLH…IAAM), and 508–531 (TVLE…KFPG). Asn91 is a glycosylation site (N-linked (GlcNAc...) asparagine). A glycan (N-linked (GlcNAc...) asparagine) is linked at Asn158. An N-linked (GlcNAc...) asparagine glycan is attached at Asn249. A glycan (N-linked (GlcNAc...) asparagine) is linked at Asn393. The N-linked (GlcNAc...) asparagine glycan is linked to Asn466. Asn514 is a glycosylation site (N-linked (GlcNAc...) asparagine). A helical membrane pass occupies residues 574 to 597 (WVSLGAFCISTMTSFYVSLATLLC). At 598–613 (SSNARNFVFRPVRVEY) the chain is on the cytoplasmic side.

In terms of tissue distribution, expressed in ear primordia, vegetative apex and young leaf tissues. Barely detected in expanded leaf tissues and not expressed in roots.

The protein localises to the cell membrane. In terms of biological role, receptor-like protein that regulates shoot meristem proliferation. Based on additive and synergistic phenotypes of double mutants, it is probable that unlike CLV1 and CLV2 in A.thaliana, FAE2 and TD1 do not function exclusively in a single pathway. The polypeptide is Leucine-rich repeat receptor-like protein FASCIATED EAR2 (FEA2) (Zea mays (Maize)).